Consider the following 87-residue polypeptide: Large ribosomal subunit protein bL27 (87 aa).

The protein belongs to the bacterial ribosomal protein bL27 family.

The protein is Large ribosomal subunit protein bL27 of Dechloromonas aromatica (strain RCB).